The following is a 501-amino-acid chain: Probable cytochrome P450 508A4 (501 aa).

Residues Met1–Tyr21 form a helical membrane-spanning segment. Position 445 (Cys445) interacts with heme.

Belongs to the cytochrome P450 family. The cofactor is heme.

The protein resides in the membrane. In Dictyostelium discoideum (Social amoeba), this protein is Probable cytochrome P450 508A4 (cyp508A4).